A 393-amino-acid chain; its full sequence is Upstream-binding factor 1-like protein 1 (393 aa).

2 consecutive DNA-binding regions (HMG box) follow at residues 100-168 (PKRP…ARFR) and 222-288 (QKPP…DLWL). Residues 308–393 (KNMAMTGGPD…SSGEEIEVDV (86 aa)) form a disordered region. Positions 365–377 (EENRKKDREKEES) are enriched in basic and acidic residues.

Its subcellular location is the cytoplasm. The protein localises to the nucleus. Its function is as follows. Essential for proliferation of the inner cell mass and trophectodermal cells in peri-implantation development. In Homo sapiens (Human), this protein is Upstream-binding factor 1-like protein 1.